Here is a 170-residue protein sequence, read N- to C-terminus: Large ribosomal subunit protein uL10 (170 aa).

This sequence belongs to the universal ribosomal protein uL10 family. As to quaternary structure, part of the ribosomal stalk of the 50S ribosomal subunit. The N-terminus interacts with L11 and the large rRNA to form the base of the stalk. The C-terminus forms an elongated spine to which L12 dimers bind in a sequential fashion forming a multimeric L10(L12)X complex.

In terms of biological role, forms part of the ribosomal stalk, playing a central role in the interaction of the ribosome with GTP-bound translation factors. In Jannaschia sp. (strain CCS1), this protein is Large ribosomal subunit protein uL10.